We begin with the raw amino-acid sequence, 647 residues long: Leucine-rich repeat and WD repeat-containing protein 1 (647 aa).

LRR repeat units lie at residues 22–43, 48–69, 70–91, and 92–113; these read KIRSLDLSGLELLSEHLDPKLL, QLQELDLSNNHLETLPDNLGLS, HLRVLRCANNQLGDVTALCQFP, and KLEELSLEGNPFLTVNDNLKVS. The segment at 204-267 is disordered; that stretch reads RTQVQKANSP…GSPVAGSDGS (64 aa). Residues Ser212, Ser243, Ser251, Ser259, and Ser264 each carry the phosphoserine modification. 7 WD repeats span residues 282–335, 341–379, 383–422, 426–472, 484–526, 542–582, and 598–646; these read HSKN…LHKY, EFFSVAWTALMVVTQAGHKKRWSVLAAAGLRGLVRLLHV, FCCGVIRAHKKAIATLCFSPAHETHLFTASYDKRIILWDI, NQDY…CWDV, EVEF…LWSW, VVLA…LYDV, and APTQ…IWGR.

Belongs to the LRWD1 family. In terms of assembly, integral component of the ORC complex. Directly interacts with CDT1, GMNN and ORC2. Interacts with ORC2 only when non-ubiquitinated; this interaction prevents LRWD1 ubiquitination and degradation. Some of these interactions are regulated in a cell-cycle dependent manner. Interaction with ORC1 occurs predominantly during G1. Association with phosphorylated ORC1 during mitosis is not efficient. Interaction with CDT1 occurs during G1 phase, as well as during mitosis with phosphorylated CDT1. Interaction with GMNN occurs from G1/S to mitosis. Interaction with ORC2 is observed throughout the cell cycle. The stoichiometry of the ORCA/ORC/CDT1/GMNN complex is 1:1:1:2. Interacts with CUL4A and DDB1; this interaction may lead to ubiquitination. Post-translationally, ubiquitinated; undergoes 'Lys-48'-linked polyubiquitination leading to proteasomal degradation. Ubiquitination occurs within the WD repeats at the end of the G1 phase. Ubiquitination may be catalyzed by the CUL4-DDB1 E3 ubiquitin-protein ligase complex and other E3 ligases. As to expression, testis-specific. Drastically down-regulated in testis from patients with Sertoli cell-only syndrome (SCOS).

It localises to the nucleus. Its subcellular location is the chromosome. The protein resides in the centromere. It is found in the telomere. The protein localises to the cytoplasm. It localises to the cytoskeleton. Its subcellular location is the microtubule organizing center. The protein resides in the centrosome. It is found in the kinetochore. In terms of biological role, required for G1/S transition. Recruits and stabilizes the origin recognition complex (ORC) onto chromatin during G1 to establish pre-replication complex (preRC) and to heterochromatic sites in post-replicated cells. Binds a combination of DNA and histone methylation repressive marks on heterochromatin. Binds histone H3 and H4 trimethylation marks H3K9me3, H3K27me3 and H4K20me3 in a cooperative manner with DNA methylation. Required for silencing of major satellite repeats. May be important ORC2, ORC3 and ORC4 stability. This chain is Leucine-rich repeat and WD repeat-containing protein 1 (LRWD1), found in Homo sapiens (Human).